The chain runs to 890 residues: Serine/threonine-protein kinase D3 (890 aa).

A phosphoserine mark is found at Ser-6, Ser-27, Ser-37, Ser-41, and Ser-44. Residues 154–204 (PHTLYVHSYKAPTFCDYCGEMLWGLVRQGLKCEGCGLNYHKRCAFKIPNNC) form a Phorbol-ester/DAG-type 1 zinc finger. A phosphoserine mark is found at Ser-213 and Ser-216. The segment at 271-321 (PHTFAVHSYTRPTICQYCKRLLKGLFRQGMQCKDCKFNCHKRCASKVPRDC) adopts a Phorbol-ester/DAG-type 2 zinc-finger fold. The interval 332–371 (SSLGTDTDIPMDIDNNDINSDSSRGLDDTEEPSPPEDKMF) is disordered. 3 positions are modified to phosphoserine: Ser-364, Ser-391, and Ser-395. A PH domain is found at 416-532 (TMVKEGWMVH…WEKAIRQALM (117 aa)). Residue Tyr-426 is modified to Phosphotyrosine. A Phosphoserine modification is found at Ser-442. Phosphotyrosine is present on Tyr-457. Thr-535 is subject to Phosphothreonine. Position 539 is a phosphoserine (Ser-539). Residues 576–832 (IFADEVLGSG…VDKSLSHPWL (257 aa)) form the Protein kinase domain. Residues 582–590 (LGSGQFGIV) and Lys-605 each bind ATP. Catalysis depends on Asp-699, which acts as the Proton acceptor. Ser-731 is modified (phosphoserine; by PKC). Phosphoserine; by autocatalysis is present on Ser-735. Tyr-742 carries the phosphotyrosine modification.

The protein belongs to the protein kinase superfamily. CAMK Ser/Thr protein kinase family. PKD subfamily. The cofactor is Mg(2+). As to expression, ubiquitous.

It is found in the cytoplasm. The protein resides in the membrane. It catalyses the reaction L-seryl-[protein] + ATP = O-phospho-L-seryl-[protein] + ADP + H(+). It carries out the reaction L-threonyl-[protein] + ATP = O-phospho-L-threonyl-[protein] + ADP + H(+). Activated by DAG and phorbol esters. Phorbol-ester/DAG-type domains 1 and 2 bind both DAG and phorbol ester with high affinity and mediate translocation to the cell membrane. Autophosphorylation of Ser-735 and phosphorylation of Ser-731 by PKC relieves auto-inhibition by the PH domain. In terms of biological role, converts transient diacylglycerol (DAG) signals into prolonged physiological effects, downstream of PKC. Involved in resistance to oxidative stress. This chain is Serine/threonine-protein kinase D3 (PRKD3), found in Homo sapiens (Human).